Reading from the N-terminus, the 1616-residue chain is Putative inactive phenolphthiocerol synthesis polyketide synthase type I Pks1 (1616 aa).

The interval 83 to 397 (TVVVFPGQGA…GQVFTTGVPV (315 aa)) is acyltransferase. The For acyltransferase activity role is filled by Ser-174. Residues 445-567 (HALLGAVVER…GMLGVAAAET (123 aa)) are N-terminal hotdog fold. The dehydratase stretch occupies residues 445 to 605 (HALLGAVVER…YAYGPAFQGL (161 aa)). The PKS/mFAS DH domain occupies 445 to 719 (HALLGAVVER…TRPITAEQLR (275 aa)). His-477 serves as the catalytic Proton acceptor; for dehydratase activity. The interval 579-719 (AESVDISDGY…TRPITAEQLR (141 aa)) is C-terminal hotdog fold. Asp-640 (proton donor; for dehydratase activity) is an active-site residue. Residues 910 to 1215 (GTLEDLVIQP…QARHIGKVVL (306 aa)) form an enoylreductase region. Residues 1040-1057 (VLIH…VQLA) and 1229-1244 (TVVI…GVLA) contribute to the NADP(+) site. The segment at 1228 to 1409 (GTVVITGATG…SLAWGLWEQP (182 aa)) is beta-ketoacyl reductase. One can recognise a Carrier domain in the interval 1514-1589 (ELLVGLVCLQ…AVAEYVAQQM (76 aa)). Ser-1549 carries the O-(pantetheine 4'-phosphoryl)serine modification. A compositionally biased stretch (polar residues) spans 1588-1604 (QMSGSRPTESGDPTSQV). The tract at residues 1588–1616 (QMSGSRPTESGDPTSQVVEPAAAEVSVHA) is disordered.

Requires pantetheine 4'-phosphate as cofactor.

It functions in the pathway lipid metabolism; fatty acid biosynthesis. Its function is as follows. May play a role in phthiocerol biosynthesis. The chain is Putative inactive phenolphthiocerol synthesis polyketide synthase type I Pks1 (pks1) from Mycobacterium tuberculosis (strain ATCC 25618 / H37Rv).